The following is a 398-amino-acid chain: Acetate kinase (398 aa).

Asparagine 9 is a Mg(2+) binding site. ATP is bound at residue lysine 16. Arginine 90 is a substrate binding site. The active-site Proton donor/acceptor is the aspartate 147. Residues 207 to 211, 282 to 284, and 330 to 334 each bind ATP; these read HIGNG, DLR, and GVGEN. Glutamate 384 serves as a coordination point for Mg(2+).

The protein belongs to the acetokinase family. Homodimer. Mg(2+) serves as cofactor. The cofactor is Mn(2+).

Its subcellular location is the cytoplasm. The enzyme catalyses acetate + ATP = acetyl phosphate + ADP. It functions in the pathway metabolic intermediate biosynthesis; acetyl-CoA biosynthesis; acetyl-CoA from acetate: step 1/2. Its function is as follows. Catalyzes the formation of acetyl phosphate from acetate and ATP. Can also catalyze the reverse reaction. The polypeptide is Acetate kinase (Staphylococcus carnosus (strain TM300)).